The primary structure comprises 262 residues: Nickel import ATP-binding protein NikD (262 aa).

In terms of domain architecture, ABC transporter spans 6-249; that stretch reads LAIEGLTATT…PGHEVTRMLV (244 aa). Residue 42 to 49 participates in ATP binding; that stretch reads GASGSGKS.

The protein belongs to the ABC transporter superfamily. Nickel importer (TC 3.A.1.5.3) family. As to quaternary structure, the complex is composed of two ATP-binding proteins (NikD and NikE), two transmembrane proteins (NikB and NikC) and a solute-binding protein (NikA).

Its subcellular location is the cell inner membrane. It catalyses the reaction Ni(2+)(out) + ATP + H2O = Ni(2+)(in) + ADP + phosphate + H(+). Part of the ABC transporter complex NikABCDE involved in nickel import. Responsible for energy coupling to the transport system. The chain is Nickel import ATP-binding protein NikD from Brucella suis biovar 1 (strain 1330).